Here is a 265-residue protein sequence, read N- to C-terminus: MSQASSTDTPFVIAGRTYGSRLLVGTGKYKDLDETRRAIEASGAEIVTVAVRRTNIGQNPDEPNLLDVIPPDRYTILPNTAGCYDAVEAVRTCRLARELLDGHNLVKLEVLADQKTLFPNVVETLKAAEQLVKDGFDVMVYTSDDPIIARQLAEIGCIAVMPLAGLIGSGLGICNPYNLRIILEEAKVPVLVDAGVGTASDAAIAMELGCEAVLMNTAIAHAKDPVMMAEAMKHAIVAGRLAYLAGRMPRKLYASASSPLDGLID.

The active-site Schiff-base intermediate with DXP is the lysine 107. Residues glycine 168, 194 to 195 (AG), and 216 to 217 (NT) each bind 1-deoxy-D-xylulose 5-phosphate.

This sequence belongs to the ThiG family. Homotetramer. Forms heterodimers with either ThiH or ThiS.

The protein resides in the cytoplasm. It catalyses the reaction [ThiS sulfur-carrier protein]-C-terminal-Gly-aminoethanethioate + 2-iminoacetate + 1-deoxy-D-xylulose 5-phosphate = [ThiS sulfur-carrier protein]-C-terminal Gly-Gly + 2-[(2R,5Z)-2-carboxy-4-methylthiazol-5(2H)-ylidene]ethyl phosphate + 2 H2O + H(+). It participates in cofactor biosynthesis; thiamine diphosphate biosynthesis. In terms of biological role, catalyzes the rearrangement of 1-deoxy-D-xylulose 5-phosphate (DXP) to produce the thiazole phosphate moiety of thiamine. Sulfur is provided by the thiocarboxylate moiety of the carrier protein ThiS. In vitro, sulfur can be provided by H(2)S. The sequence is that of Thiazole synthase from Pseudomonas aeruginosa (strain LESB58).